Consider the following 748-residue polypeptide: E3 ubiquitin-protein ligase DTX3L (748 aa).

A2 is modified (N-acetylalanine). S9 is modified (phosphoserine). Disordered regions lie at residues D94–T117, E209–Q238, and Q528–S562. Over residues S101–T117 the composition is skewed to polar residues. 2 stretches are compositionally biased toward basic and acidic residues: residues E209–R219 and T227–P236. S215 is subject to Phosphoserine. S536 is subject to Phosphoserine. Residues C569–L608 form an RING-type zinc finger.

Belongs to the Deltex family. Homodimer and heterodimer. Can heterodimerize with DTX1, enhancing its ubiquitin ligase activity in vitro. Interacts (via N-terminus) with ADP ribosyltransferase PARP9/BAL1 (via PARP catalytic domain) forming a stable complex; the interaction is required to activate PARP9 but is dispensable for DTX3L catalytic activity. Forms a complex with STAT1 and PARP9 independently of IFNB1 or IFNG-mediated STAT1 'Tyr-701' phosphorylation. Found in a complex with PARP9, STAT1 and H2BC9. Found in a complex with E3 ligase ITCH and ESCRT-0 components HGS and STAM. Interacts (via C-terminus) with ITCH; the interaction is increased upon CXCL12 stimulation and inhibits ITCH catalytic activity; the interaction is direct. Interacts with HGS and STAM; the interaction brings together HGS and STAM and promotes their recruitment to early endosomes. In terms of processing, autoubiquitinated.

It localises to the cytoplasm. The protein resides in the nucleus. It is found in the early endosome membrane. The protein localises to the lysosome membrane. The catalysed reaction is S-ubiquitinyl-[E2 ubiquitin-conjugating enzyme]-L-cysteine + [acceptor protein]-L-lysine = [E2 ubiquitin-conjugating enzyme]-L-cysteine + N(6)-ubiquitinyl-[acceptor protein]-L-lysine.. Its pathway is protein modification; protein ubiquitination. Binding to PARP9 enhances DTX3L catalytic activity. In terms of biological role, E3 ubiquitin-protein ligase which, in association with ADP-ribosyltransferase PARP9, plays a role in DNA damage repair and in interferon-mediated antiviral responses. Monoubiquitinates several histones, including histone H2A, H2B, H3 and H4. In response to DNA damage, mediates monoubiquitination of 'Lys-91' of histone H4 (H4K91ub1). The exact role of H4K91ub1 in DNA damage response is still unclear but it may function as a licensing signal for additional histone H4 post-translational modifications such as H4 'Lys-20' methylation (H4K20me). PARP1-dependent PARP9-DTX3L-mediated ubiquitination promotes the rapid and specific recruitment of 53BP1/TP53BP1, UIMC1/RAP80, and BRCA1 to DNA damage sites. By monoubiquitinating histone H2B H2BC9/H2BJ and thereby promoting chromatin remodeling, positively regulates STAT1-dependent interferon-stimulated gene transcription and thus STAT1-mediated control of viral replication. Independently of its catalytic activity, promotes the sorting of chemokine receptor CXCR4 from early endosome to lysosome following CXCL12 stimulation by reducing E3 ligase ITCH activity and thus ITCH-mediated ubiquitination of endosomal sorting complex required for transport ESCRT-0 components HGS and STAM. In addition, required for the recruitment of HGS and STAM to early endosomes. The sequence is that of E3 ubiquitin-protein ligase DTX3L (Dtx3l) from Mus musculus (Mouse).